A 217-amino-acid chain; its full sequence is Vesicle transport through interaction with t-SNAREs homolog 1A (217 aa).

The Cytoplasmic segment spans residues 1-192 (MSSDFEGYEQ…GMLRRIIQNR (192 aa)). 2 coiled-coil regions span residues 31–92 (PDEK…KRSR) and 112–178 (ENQR…GKSS). Residues 193-213 (ILLVILGIIVVIAILTAIAFF) form a helical; Anchor for type IV membrane protein membrane-spanning segment. Residues 214 to 217 (VKGH) are Vesicular-facing.

The protein belongs to the VTI1 family. Interacts with distinct SNARE complexes that contain either STX5 or STX6. Interacts with NAPA and, to a lesser extent, with NAPG. Identified in a complex containing STX6, STX12, VAMP4 and VTI1A. As to expression, widely expressed.

Its subcellular location is the golgi apparatus membrane. Its function is as follows. V-SNARE that mediates vesicle transport pathways through interactions with t-SNAREs on the target membrane. These interactions are proposed to mediate aspects of the specificity of vesicle trafficking and to promote fusion of the lipid bilayers. Involved in vesicular transport from the late endosomes to the trans-Golgi network. Along with VAMP7, involved in an non-conventional RAB1-dependent traffic route to the cell surface used by KCNIP1 and KCND2. May be concerned with increased secretion of cytokines associated with cellular senescence. In Mus musculus (Mouse), this protein is Vesicle transport through interaction with t-SNAREs homolog 1A (Vti1a).